The sequence spans 176 residues: Large ribosomal subunit protein uL6 (176 aa).

The protein belongs to the universal ribosomal protein uL6 family. As to quaternary structure, part of the 50S ribosomal subunit.

This protein binds to the 23S rRNA, and is important in its secondary structure. It is located near the subunit interface in the base of the L7/L12 stalk, and near the tRNA binding site of the peptidyltransferase center. This is Large ribosomal subunit protein uL6 from Dechloromonas aromatica (strain RCB).